The chain runs to 594 residues: Kelch domain-containing protein 7B (594 aa).

Residues 1–174 (MVLRSHPFPR…PAGRSGALTE (174 aa)) form a disordered region. Residues 49-58 (IGTGTGGLVE) show a composition bias toward gly residues. Residues 64 to 74 (QPRSSETNGSP) show a composition bias toward polar residues. Pro residues predominate over residues 104–115 (PAQPPAQRPPGP). The span at 116 to 126 (AASSSARRSQP) shows a compositional bias: low complexity. Kelch repeat units lie at residues 306–354 (EEPP…TMHN), 355–405 (YLFL…ALDG), 406–448 (LLYA…AVAC), 451–493 (DIYV…ALGG), and 495–538 (LYRF…TTLG).

The sequence is that of Kelch domain-containing protein 7B (KLHDC7B) from Homo sapiens (Human).